Reading from the N-terminus, the 351-residue chain is Photosystem II D2 protein (351 aa).

Residues 39 to 59 traverse the membrane as a helical segment; that stretch reads TAYLSIGGWLTGTTFVTSWYT. Histidine 116 lines the chlorophyll a pocket. The helical transmembrane segment at 123–139 threads the bilayer; sequence GFMLRQFEIARLVGIRP. Glutamine 128 and asparagine 141 together coordinate pheophytin a. The helical transmembrane segment at 151–164 threads the bilayer; it reads VFVSVFLMYPLGQS. Histidine 196 is a chlorophyll a binding site. The helical transmembrane segment at 206 to 226 threads the bilayer; that stretch reads GALLCAIHGATVENTLFEDGE. A plastoquinone contacts are provided by histidine 213 and phenylalanine 260. Histidine 213 is a Fe cation binding site. Residue histidine 267 participates in Fe cation binding. A helical transmembrane segment spans residues 277 to 293; the sequence is GLWTSAIGIIGLALNLR.

Belongs to the reaction center PufL/M/PsbA/D family. As to quaternary structure, PSII is composed of 1 copy each of membrane proteins PsbA, PsbB, PsbC, PsbD, PsbE, PsbF, PsbH, PsbI, PsbJ, PsbK, PsbL, PsbM, PsbT, PsbX, PsbY, PsbZ, Psb30/Ycf12, peripheral proteins PsbO, CyanoQ (PsbQ), PsbU, PsbV and a large number of cofactors. It forms dimeric complexes. The cofactor is The D1/D2 heterodimer binds P680, chlorophylls that are the primary electron donor of PSII, and subsequent electron acceptors. It shares a non-heme iron and each subunit binds pheophytin, quinone, additional chlorophylls, carotenoids and lipids. There is also a Cl(-1) ion associated with D1 and D2, which is required for oxygen evolution. The PSII complex binds additional chlorophylls, carotenoids and specific lipids..

Its subcellular location is the cellular thylakoid membrane. It carries out the reaction 2 a plastoquinone + 4 hnu + 2 H2O = 2 a plastoquinol + O2. Functionally, photosystem II (PSII) is a light-driven water:plastoquinone oxidoreductase that uses light energy to abstract electrons from H(2)O, generating O(2) and a proton gradient subsequently used for ATP formation. It consists of a core antenna complex that captures photons, and an electron transfer chain that converts photonic excitation into a charge separation. The D1/D2 (PsbA/PsbD) reaction center heterodimer binds P680, the primary electron donor of PSII as well as several subsequent electron acceptors. D2 is needed for assembly of a stable PSII complex. In Synechococcus sp. (strain CC9311), this protein is Photosystem II D2 protein.